The following is a 447-amino-acid chain: Adenylosuccinate synthetase (447 aa).

GTP is bound by residues 35-41 (GDEGKGK) and 63-65 (GHT). The Proton acceptor role is filled by D36. Residues D36 and G63 each contribute to the Mg(2+) site. IMP-binding positions include 36–39 (DEGK), 61–64 (NAGH), T153, R167, N245, T260, and R324. Catalysis depends on H64, which acts as the Proton donor. 320–326 (VTTKRKR) serves as a coordination point for substrate. GTP contacts are provided by residues R326, 352–354 (KLD), and 435–437 (GVG).

Belongs to the adenylosuccinate synthetase family. Homodimer. It depends on Mg(2+) as a cofactor.

The protein localises to the cytoplasm. It catalyses the reaction IMP + L-aspartate + GTP = N(6)-(1,2-dicarboxyethyl)-AMP + GDP + phosphate + 2 H(+). It participates in purine metabolism; AMP biosynthesis via de novo pathway; AMP from IMP: step 1/2. In terms of biological role, plays an important role in the de novo pathway and in the salvage pathway of purine nucleotide biosynthesis. Catalyzes the first committed step in the biosynthesis of AMP from IMP. Plays a role in the regulation of adult life span. This is Adenylosuccinate synthetase from Drosophila melanogaster (Fruit fly).